The following is a 432-amino-acid chain: Non-peptidase homolog YmxG (432 aa).

The N-terminal stretch at 1-20 (MKKFLITLLLGVFMGLQASA) is a signal peptide.

It belongs to the peptidase M16 family.

The protein localises to the secreted. May contribute to the full activity of the protease PqqE. The chain is Non-peptidase homolog YmxG from Helicobacter pylori (strain ATCC 700392 / 26695) (Campylobacter pylori).